The primary structure comprises 207 residues: Glycerol-3-phosphate acyltransferase (207 aa).

The next 6 membrane-spanning stretches (helical) occupy residues 8–28 (NIVFYLLAYLIGSIPFGLILA), 64–84 (LGIATVLLDALKGTLVLLVGI), 92–112 (TLWAIAVLAVLGHCYSIYLGL), 122–142 (LGVYIVLIPYSTLIGAVVWIV), 154–174 (SLLGLIAAVISAIFIYNGLGI), and 176–196 (SNIPMYLIAFIILYKHIPNIV).

This sequence belongs to the PlsY family. In terms of assembly, probably interacts with PlsX.

Its subcellular location is the cell inner membrane. It carries out the reaction an acyl phosphate + sn-glycerol 3-phosphate = a 1-acyl-sn-glycero-3-phosphate + phosphate. Its pathway is lipid metabolism; phospholipid metabolism. Functionally, catalyzes the transfer of an acyl group from acyl-phosphate (acyl-PO(4)) to glycerol-3-phosphate (G3P) to form lysophosphatidic acid (LPA). This enzyme utilizes acyl-phosphate as fatty acyl donor, but not acyl-CoA or acyl-ACP. This chain is Glycerol-3-phosphate acyltransferase, found in Aliarcobacter butzleri (strain RM4018) (Arcobacter butzleri).